Reading from the N-terminus, the 442-residue chain is Limonoid 1-O-acetyltransferse (442 aa).

Catalysis depends on proton acceptor residues histidine 155 and aspartate 381.

The protein belongs to the plant acyltransferase family. Monomer.

The enzyme catalyses (1S)-1-hydroxy-luvungin A + acetyl-CoA = (1S)-1-acetoxy-luvungin A + CoA. It participates in secondary metabolite biosynthesis; terpenoid biosynthesis. Acetyltransferase involved in the biosynthesis of limonoids triterpene natural products such as limonin, a compound with insecticidal activity responsible for the bitter taste in citrus. Catalyzes the formation of (1S)-1-acetoxy-luvungin A from (1S)-1-hydroxy-luvungin A. The sequence is that of Limonoid 1-O-acetyltransferse from Citrus sinensis (Sweet orange).